The following is a 559-amino-acid chain: Nuclear speckle splicing regulatory protein 1 (559 aa).

Residues 22 to 57 form a disordered region; the sequence is VLQKPSVFGNDSDDDDDETSVSESLQREAAKKQAMK. A phosphoserine mark is found at Ser27 and Ser33. Positions 32–41 are enriched in acidic residues; that stretch reads DSDDDDDETS. The stretch at 105–179 forms a coiled coil; that stretch reads IHNLLKAVEI…EARLDVTKQR (75 aa). The interval 107–171 is necessary for alternative splicing activity; the sequence is NLLKAVEIRK…RERRAAALEA (65 aa). A disordered region spans residues 195-534; the sequence is EEEVPTCSFR…AKRSNEETVT (340 aa). The span at 204–219 shows a compositional bias: basic and acidic residues; sequence REARSEIKEEKSKGYS. Residue Lys211 forms a Glycyl lysine isopeptide (Lys-Gly) (interchain with G-Cter in SUMO2) linkage. 3 positions are modified to phosphoserine: Ser249, Ser255, and Ser256. A compositionally biased stretch (basic and acidic residues) spans 251–274; sequence FDAKSSENDEMEGDKGNCRREKGT. Thr276 carries the phosphothreonine modification. Lys282 is covalently cross-linked (Glycyl lysine isopeptide (Lys-Gly) (interchain with G-Cter in SUMO2)). Composition is skewed to basic and acidic residues over residues 314–343, 351–488, and 502–521; these read EKRE…EKRD, SHRD…RNPE, and RITE…HETV. A coiled-coil region spans residues 379 to 428; sequence KREKDREKYPSREQERHRQRNNYDRHNEKGCEKEEKSKEKEEHVKARKER. Position 458 is a phosphoserine (Ser458).

It belongs to the NSRP1 family. In terms of assembly, interacts (via C-terminus) with SRSF1. Interacts (via C-terminus) with SRSF2.

Its subcellular location is the nucleus. The protein resides in the nucleus speckle. Functionally, RNA-binding protein that mediates pre-mRNA alternative splicing regulation. The chain is Nuclear speckle splicing regulatory protein 1 (NSRP1) from Bos taurus (Bovine).